The primary structure comprises 663 residues: Cyclic nucleotide-gated channel alpha-2 (663 aa).

The segment at 1–61 is disordered; sequence MTEKANGVKS…QLAEMDAPQQ (61 aa). Topologically, residues 1–144 are cytoplasmic; the sequence is MTEKANGVKS…PAGDWYYRWL (144 aa). Positions 12–23 are enriched in low complexity; sequence PANNHNHHAPPA. The helical transmembrane segment at 145–166 threads the bilayer; the sequence is FLIALPVLYNWCLLVARACFSD. Residues 167 to 176 lie on the Extracellular side of the membrane; sequence LQKGYYIVWL. A helical transmembrane segment spans residues 177 to 197; the sequence is VLDYVSDVVYIADLFIRLRTG. Topologically, residues 198–222 are cytoplasmic; it reads FLEQGLLVKDTKKLRDNYIHTMQFK. A helical membrane pass occupies residues 223–241; sequence LDVASIIPTDLIYFAVGIH. Residues 242–246 lie on the Extracellular side of the membrane; sequence NPEVR. Residues 247-265 form a helical membrane-spanning segment; it reads FNRLLHFARMFEFFDRTET. Topologically, residues 266–272 are cytoplasmic; sequence RTSYPNI. The tract at residues 270-378 is ion conduction pathway; it reads PNIFRISNLI…GNVGSMISNM (109 aa). The helical transmembrane segment at 273 to 296 threads the bilayer; that stretch reads FRISNLILYILIIIHWNACIYYAI. Residues 297–319 lie on the Extracellular side of the membrane; the sequence is SKSIGFGVDTWVYPNITDPEYGY. 2 consecutive transmembrane segments (helical) span residues 320 to 354 and 355 to 379; these read LSRE…LFVI and FDFL…SNMN. The selectivity filter stretch occupies residues 337 to 340; sequence TIGE. Residues 380 to 456 are C-linker; it reads ATRAEFQAKI…STLKKVRIFQ (77 aa). The Cytoplasmic segment spans residues 380-663; that stretch reads ATRAEFQAKI…NSPEPPAEKP (284 aa). The segment at 460–580 is cyclic nucleotide-binding domain; the sequence is AGLLVELVLK…EERGREILMK (121 aa). Residues Gly520, Ser523, Arg536, and Thr537 each coordinate 3',5'-cyclic GMP. Arg536 and Thr537 together coordinate 3',5'-cyclic AMP. Residues 597–651 are a coiled coil; sequence VQEKLEQLETNMDTLYTRFARLLAEYTGAQQKLKQRITVLETKMKQNNEDDSLSD. The segment at 640-663 is disordered; the sequence is MKQNNEDDSLSDGMNSPEPPAEKP.

This sequence belongs to the cyclic nucleotide-gated cation channel (TC 1.A.1.5) family. CNGA2 subfamily. In terms of assembly, the olfactory cyclic nucleotide-gated channel is an heterotetramer composed of CNGA2, CNGA4 and CNGB1b subunits with 2:1:1 stoichiometry. As to expression, olfactory neurons.

The protein localises to the cell projection. The protein resides in the cilium membrane. The enzyme catalyses Ca(2+)(in) = Ca(2+)(out). It carries out the reaction Na(+)(in) = Na(+)(out). The catalysed reaction is K(+)(in) = K(+)(out). It catalyses the reaction NH4(+)(in) = NH4(+)(out). The enzyme catalyses Rb(+)(in) = Rb(+)(out). It carries out the reaction Li(+)(in) = Li(+)(out). The catalysed reaction is Cs(+)(in) = Cs(+)(out). Functionally, pore-forming subunit of the olfactory cyclic nucleotide-gated channel. Operates in the cilia of olfactory sensory neurons where chemical stimulation of the odorant is converted to an electrical signal. Mediates odorant-induced cAMP-dependent Ca(2+) influx triggering neuron depolarization. The rise of intracellular Ca(2+) levels potentiates the olfactory response by activating Ca(2+)-dependent Cl(-) channels, but it also serves as a negative feedback signal to desensitize the channel for rapid adaptation to odorants. Conducts cAMP- and cGMP-gated ion currents, with permeability for monovalent and divalent cations. The polypeptide is Cyclic nucleotide-gated channel alpha-2 (Bos taurus (Bovine)).